Consider the following 664-residue polypeptide: Ent-copalyl diphosphate synthase 5 (664 aa).

Lysine 101 is a substrate binding site. Aspartate 233 and aspartate 235 together coordinate Mg(2+). The DXDD motif motif lies at 233–236 (DIDD). Lysine 320 is a binding site for substrate.

It belongs to the terpene synthase family. Tpsc subfamily. Mg(2+) is required as a cofactor. Ubiquitous expression in roots, stems, leaves and flowers.

Its subcellular location is the plastid. It localises to the chloroplast. The enzyme catalyses (2E,6E,10E)-geranylgeranyl diphosphate = ent-copalyl diphosphate. The protein operates within secondary metabolite biosynthesis; terpenoid biosynthesis. Functionally, involved in the biosynthesis of ent-kaurene diterpenoids natural products such as oridonin, miltiradiene, eriocalyxin B and nezukol, known to exhibit antitumor, anti-inflammatory and antibacterial activities. Catalyzes the conversion of (2E,6E,10E)-geranylgeranyl diphosphate (GGPP) to ent-copalyl diphosphate (ent-CPP). This Isodon rubescens (Rabdosia rubescens) protein is Ent-copalyl diphosphate synthase 5.